The primary structure comprises 149 residues: Ribonuclease P protein component (149 aa).

The segment at 123–149 (GTKVSRRSNGALHDAAPSSQPDPTVSG) is disordered. Residues 139-149 (PSSQPDPTVSG) are compositionally biased toward polar residues.

Belongs to the RnpA family. Consists of a catalytic RNA component (M1 or rnpB) and a protein subunit.

It catalyses the reaction Endonucleolytic cleavage of RNA, removing 5'-extranucleotides from tRNA precursor.. In terms of biological role, RNaseP catalyzes the removal of the 5'-leader sequence from pre-tRNA to produce the mature 5'-terminus. It can also cleave other RNA substrates such as 4.5S RNA. The protein component plays an auxiliary but essential role in vivo by binding to the 5'-leader sequence and broadening the substrate specificity of the ribozyme. The sequence is that of Ribonuclease P protein component from Caulobacter vibrioides (strain ATCC 19089 / CIP 103742 / CB 15) (Caulobacter crescentus).